The primary structure comprises 395 residues: Argininosuccinate synthase (395 aa).

7-15 (LYSGGLDTS) contributes to the ATP binding site. Tyr83 serves as a coordination point for L-citrulline. Gly113 contributes to the ATP binding site. 3 residues coordinate L-aspartate: Thr115, Asn119, and Asp120. Residue Asn119 coordinates L-citrulline. Residues Arg123, Ser169, Ser178, Glu253, and Tyr265 each contribute to the L-citrulline site.

Belongs to the argininosuccinate synthase family. Type 1 subfamily. In terms of assembly, homotetramer.

It localises to the cytoplasm. The catalysed reaction is L-citrulline + L-aspartate + ATP = 2-(N(omega)-L-arginino)succinate + AMP + diphosphate + H(+). It participates in amino-acid biosynthesis; L-arginine biosynthesis; L-arginine from L-ornithine and carbamoyl phosphate: step 2/3. The protein is Argininosuccinate synthase of Picrophilus torridus (strain ATCC 700027 / DSM 9790 / JCM 10055 / NBRC 100828 / KAW 2/3).